Here is a 392-residue protein sequence, read N- to C-terminus: Metallophosphoesterase 1 (392 aa).

The chain crosses the membrane as a helical span at residues 25–45 (KLAALVFAVVLFCEFLIYYLV). A divalent metal cation contacts are provided by Asp-73, Asp-115, Asn-153, His-246, His-300, and His-302. A helical membrane pass occupies residues 352–372 (DTVLATYCVAAGLLVVLILVH).

It belongs to the metallophosphoesterase superfamily. MPPE1 family. In terms of assembly, interacts with GPI-anchor proteins (via the GPI portion). Interacts with TMED10. Requires Mn(2+) as cofactor.

Its subcellular location is the endoplasmic reticulum-Golgi intermediate compartment membrane. In terms of biological role, metallophosphoesterase that catalyzes the removal of a side-chain ethanolamine-phosphate (EtNP) from the second mannose of the GPI-anchor protein intermediate. Participates in the glycan remodeling steps of GPI-anchor maturation to allow an efficient transport of GPI-anchor proteins from the endoplasmic reticulum to the Golgi. This chain is Metallophosphoesterase 1, found in Ailuropoda melanoleuca (Giant panda).